The primary structure comprises 723 residues: Protein Hook homolog (723 aa).

A Calponin-homology (CH) domain is found at 4–120 (TELCECLVQW…RLLQLILGCA (117 aa)). 2 coiled-coil regions span residues 162-423 (VLPE…MQLQ) and 457-665 (EIKE…IVSA). The tract at residues 682 to 723 (LANGGPMQGGQSFLARQRQATSRRTTVSTTHPGHARSVNFVN) is disordered. Residues 696-711 (ARQRQATSRRTTVSTT) are compositionally biased toward low complexity.

It belongs to the hook family. In terms of assembly, interacts with microtubules.

The protein localises to the cytoplasm. The protein resides in the cytoskeleton. In terms of biological role, may function to promote vesicle trafficking and/or fusion. May act to link a number of membrane-bound organelles to the cytoskeleton. The protein is Protein Hook homolog of Branchiostoma floridae (Florida lancelet).